We begin with the raw amino-acid sequence, 1136 residues long: Collagen alpha-1(XIX) chain (1136 aa).

A signal peptide spans 1-23; it reads MRHTGSWKLWTWVTTFLLPACTC. Residue Asn47 is glycosylated (N-linked (GlcNAc...) asparagine). The Laminin G-like domain occupies 47–231; that stretch reads NKSELSGFDL…LHQLRIYCNA (185 aa). Disordered stretches follow at residues 252–272, 289–673, 699–1005, and 1043–1136; these read DFGS…SSYL, EEAG…PGDP, GLKS…TPAD, and SAQA…AGGK. Residues 254–266 show a composition bias toward low complexity; that stretch reads GSTTSSWGTSNTG. The segment at 289 to 348 is triple-helical region 1 (COL1); that stretch reads EEAGLPGTLRSIGHKGDKGEPGEHGLDGTPGLPGQKGEQGLEGIKGEIGEKGEPGAKGDS. Collagen-like domains are found at residues 292–346, 347–388, and 389–430; these read GLPG…GAKG, DSGL…ALTG, and SIGI…GLQG. 2 stretches are compositionally biased toward basic and acidic residues: residues 302-314 and 332-344; these read HKGD…EHGL and IKGE…EPGA. The interval 367–426 is triple-helical region 2 (COL2); that stretch reads GPPGPKGDKGDMGPPGPPALTGSIGIQGPQGPPGKEGQRGRRGKTGPPGNPGPPGPPGPP. The span at 387-401 shows a compositional bias: low complexity; that stretch reads TGSIGIQGPQGPPGK. Over residues 414-426 the composition is skewed to pro residues; sequence PGNPGPPGPPGPP. A compositionally biased stretch (low complexity) spans 428–437; sequence LQGLQQPFGG. Residues 442-682 are triple-helical region 3 (COL3); that stretch reads GTGEHGASGP…PIALPLLGDI (241 aa). Positions 472–490 are enriched in basic and acidic residues; it reads HKGEPGEPLTKGEKGDRGE. 2 stretches are compositionally biased toward low complexity: residues 511–523 and 567–577; these read LLGS…QQGP and PGLKGDAGPPG. Collagen-like domains follow at residues 519–577, 578–618, 620–673, 722–777, 778–810, and 833–891; these read GQQG…GPPG, ISLP…GPPG, GIPG…PGDP, KGDV…GPPG, LTGR…GPPG, and GYPG…APGP. Over residues 634 to 645 the composition is skewed to low complexity; the sequence is PGIQGPRGLPGL. Residues 694–812 form a triple-helical region 4 (COL4) region; that stretch reads QANVPGLKSI…PGPPGPPGVP (119 aa). 2 stretches are compositionally biased toward basic and acidic residues: residues 714-725 and 737-758; these read GKYDPAARKGDV and EGPK…KGDE. Low complexity predominate over residues 764-788; the sequence is PGLSGAPGPTGPPGLTGRTGHPGPT. Composition is skewed to pro residues over residues 800–811 and 834–846; these read PGKPGPPGPPGV and YPGP…PKGD. Positions 827 to 1006 are triple-helical region 5 (COL5); it reads GGVNVPGYPG…PGIPGTPADA (180 aa). Low complexity predominate over residues 877–886; it reads PGIAGISGKP. Residues 937–948 show a composition bias toward basic and acidic residues; sequence PGDRGPKGERGD. The short motif at 946–948 is the Cell attachment site element; sequence RGD. Residues 1048-1105 are triple-helical region 6 (COL6); it reads GRPGPPGKDGLPGPPGDPGPQGYRGQKGERGEPGIGLPGSPGLPGSSAVGLPGSPGAP. The span at 1087–1101 shows a compositional bias: low complexity; that stretch reads SPGLPGSSAVGLPGS. A compositionally biased stretch (pro residues) spans 1102-1113; sequence PGAPGPQGPPGP.

This sequence belongs to the fibril-associated collagens with interrupted helices (FACIT) family. In terms of assembly, oligomer; disulfide-linked. Prolines at the third position of the tripeptide repeating unit (G-X-Y) are hydroxylated in some or all of the chains.

The protein localises to the secreted. The protein resides in the extracellular space. Its subcellular location is the extracellular matrix. Functionally, may act as a cross-bridge between fibrils and other extracellular matrix molecules. Involved in skeletal myogenesis in the developing esophagus. May play a role in organization of the pericellular matrix or the sphinteric smooth muscle. This chain is Collagen alpha-1(XIX) chain, found in Mus musculus (Mouse).